A 91-amino-acid polypeptide reads, in one-letter code: Small ribosomal subunit protein uS19m (91 aa).

This sequence belongs to the universal ribosomal protein uS19 family. As to quaternary structure, component of the mitochondrial small ribosomal subunit (mt-SSU). Mature yeast 74S mitochondrial ribosomes consist of a small (37S) and a large (54S) subunit. The 37S small subunit contains a 15S ribosomal RNA (15S mt-rRNA) and 34 different proteins. The 54S large subunit contains a 21S rRNA (21S mt-rRNA) and 46 different proteins.

The protein localises to the mitochondrion. Component of the mitochondrial ribosome (mitoribosome), a dedicated translation machinery responsible for the synthesis of mitochondrial genome-encoded proteins, including at least some of the essential transmembrane subunits of the mitochondrial respiratory chain. The mitoribosomes are attached to the mitochondrial inner membrane and translation products are cotranslationally integrated into the membrane. This chain is Small ribosomal subunit protein uS19m (RSM19), found in Saccharomyces cerevisiae (strain ATCC 204508 / S288c) (Baker's yeast).